The chain runs to 549 residues: Cation/acetate symporter ActP (549 aa).

The next 13 membrane-spanning stretches (helical) occupy residues 33 to 53 (WQAI…TYWA), 77 to 97 (LAIA…ALVF), 103 to 123 (GLIY…LIAE), 148 to 168 (ILSA…QMVG), 183 to 203 (IAVV…GMLA), 206 to 226 (WVQI…AFMV), 262 to 282 (ISAL…PHIL), 303 to 323 (GFMG…IMLV), 355 to 375 (LFLG…VAGL), 404 to 424 (VSKI…VLFE), 428 to 448 (IAFM…PIIL), 464 to 484 (GGWL…TIWV), and 493 to 513 (IFPY…GIWF).

The protein belongs to the sodium:solute symporter (SSF) (TC 2.A.21) family.

The protein resides in the cell inner membrane. In terms of biological role, transports acetate. In Escherichia coli O8 (strain IAI1), this protein is Cation/acetate symporter ActP.